Reading from the N-terminus, the 608-residue chain is Mitogen-activated protein kinase kinase kinase 1 (608 aa).

Positions 1–13 are enriched in basic residues; the sequence is MDRILARMKKSTG. The interval 1-20 is disordered; the sequence is MDRILARMKKSTGRRGGDKN. The segment at 1–325 is regulatory region; it reads MDRILARMKK…VSNTSPIYPD (325 aa). At Ser-62 the chain carries Phosphoserine. The binding with MPK4 stretch occupies residues 192-234; sequence MERTPTIVKSKGYLVPNNVVAVGVGVGGGIKGLRPPVLKPPPA. 2 disordered regions span residues 228-247 and 256-287; these read VLKP…GSSW and SETV…EAEE. A compositionally biased stretch (acidic residues) spans 271–287; sequence DGCDEEEGKEEEAEAEE. The region spanning 333–587 is the Protein kinase domain; sequence WQKGQLLGRG…AAELLNHPFV (255 aa). ATP contacts are provided by residues 339–347 and Lys-361; that span reads LGRGSFGSV. Residue Asp-456 is the Proton acceptor of the active site. Ser-603 carries the post-translational modification Phosphoserine.

It belongs to the protein kinase superfamily. STE Ser/Thr protein kinase family. MAP kinase kinase kinase subfamily. Interacts with MKK1, MMK2 and MPK4. May form a ternary complex composed of MEKK1 and MKK1/MKK2 and MPK4. Interacts with RACK1A, RACK1B and RACK1C. Binds to CRLK1. In terms of processing, phosphorylated by CRLK1 in response to cold.

It localises to the cell membrane. Its subcellular location is the endosome. It catalyses the reaction L-seryl-[protein] + ATP = O-phospho-L-seryl-[protein] + ADP + H(+). The catalysed reaction is L-threonyl-[protein] + ATP = O-phospho-L-threonyl-[protein] + ADP + H(+). With respect to regulation, activated by cold via CRLK1-mediated phosphorylation and leading to elevated kinase activity towards MKK2. Functionally, the MEKK1, MKK1/MKK2 and MPK4 function in a signaling pathway that modulates the expression of genes responding to biotic and abiotic stresses and also plays an important role in pathogen defense by negatively regulating innate immunity. Involved in the innate immune MAP kinase signaling cascade (MEKK1, MKK4/MKK5 and MPK3/MPK6) downstream of bacterial flagellin receptor FLS2. May be involved in the cold and salinity stress-mediated MAP kinase signaling cascade (MEKK1, MKK1/MKK2 and MPK4/MPK6). Activates by phosphorylation the downstream MKK2, MKK4 and MKK5 in a calcium-dependent manner. The protein is Mitogen-activated protein kinase kinase kinase 1 (MEKK1) of Arabidopsis thaliana (Mouse-ear cress).